Consider the following 604-residue polypeptide: Elongation factor 4 (604 aa).

The region spanning 7-189 (KRIRNFCIIA…SVVDRVPPPA (183 aa)) is the tr-type G domain. Residues 19-24 (DHGKST) and 136-139 (NKID) each bind GTP.

The protein belongs to the TRAFAC class translation factor GTPase superfamily. Classic translation factor GTPase family. LepA subfamily.

It is found in the cell inner membrane. It catalyses the reaction GTP + H2O = GDP + phosphate + H(+). Functionally, required for accurate and efficient protein synthesis under certain stress conditions. May act as a fidelity factor of the translation reaction, by catalyzing a one-codon backward translocation of tRNAs on improperly translocated ribosomes. Back-translocation proceeds from a post-translocation (POST) complex to a pre-translocation (PRE) complex, thus giving elongation factor G a second chance to translocate the tRNAs correctly. Binds to ribosomes in a GTP-dependent manner. The protein is Elongation factor 4 of Synechococcus sp. (strain CC9311).